Here is a 449-residue protein sequence, read N- to C-terminus: Type 3 secretion system ATPase (449 aa).

Residue Gly-178 to Thr-183 participates in ATP binding.

This sequence belongs to the ATPase alpha/beta chains family. T3SS ATPase subfamily. The core secretion machinery of the T3SS is composed of approximately 20 different proteins, including cytoplasmic components, a base, an export apparatus and a needle. This subunit is part of the cytosolic complex. Forms homododecamers.

Its subcellular location is the cytoplasm. The catalysed reaction is ATP + H2O + cellular proteinSide 1 = ADP + phosphate + cellular proteinSide 2.. ATPase component of the type III secretion system (T3SS), also called injectisome, which is used to inject bacterial effector proteins into eukaryotic host cells. Acts as a molecular motor to provide the energy that is required for the export of proteins. Required for type III secretion apparatus (T3SA) formation, proper protein secretion, host cell invasion and virulence. May play a critical role in T3SS substrate recognition, disassembly of the effector/chaperone complex and unfolding of the effector in an ATP-dependent manner prior to secretion. In Pseudomonas syringae pv. syringae, this protein is Type 3 secretion system ATPase.